A 203-amino-acid chain; its full sequence is Ras-related protein Rab-30 (203 aa).

Valine 20, glycine 21, lysine 22, threonine 23, cysteine 24, and threonine 41 together coordinate GTP. Mg(2+) is bound at residue threonine 23. The segment at 36–44 (PGQGATIGV) is switch-I. Positions 41 and 64 each coordinate Mg(2+). The GTP site is built by glycine 67, asparagine 122, lysine 123, aspartate 125, alanine 153, and lysine 154. The tract at residues 67 to 83 (GQERFRSITQSYYRSAN) is switch-II. S-geranylgeranyl cysteine attachment occurs at residues cysteine 199 and cysteine 200. Cysteine methyl ester is present on cysteine 200. The propeptide at 201 to 203 (NFN) is removed in mature form.

The protein belongs to the small GTPase superfamily. Rab family. Mg(2+) is required as a cofactor.

It is found in the membrane. The protein resides in the golgi apparatus. It localises to the trans-Golgi network membrane. The protein localises to the cis-Golgi network membrane. Its subcellular location is the golgi apparatus membrane. It is found in the cytoplasm. The protein resides in the cytoplasmic vesicle. It localises to the autophagosome membrane. The protein localises to the autolysosome membrane. The enzyme catalyses GTP + H2O = GDP + phosphate + H(+). Its activity is regulated as follows. Regulated by guanine nucleotide exchange factors (GEFs) which promote the exchange of bound GDP for free GTP. Regulated by GTPase activating proteins (GAPs) which increase the GTP hydrolysis activity. Inhibited by GDP dissociation inhibitors (GDIs). Functionally, the small GTPases Rab are key regulators of intracellular membrane trafficking, from the formation of transport vesicles to their fusion with membranes. Rabs cycle between an inactive GDP-bound form and an active GTP-bound form that is able to recruit to membranes different sets of downstream effectors directly responsible for vesicle formation, movement, tethering and fusion. RAB30 is required for maintaining the structural integrity of the Golgi apparatus, possibly by mediating interactions with cytoplasmic scaffolding proteins. Facilitates lipid homeostasis during fasting by regulating hepatic protein and lipid trafficking in a PPAR-alpha-dependent manner. Promotes autophagosome biogenesis during bacterial infection such as group A Streptococcus infection. The polypeptide is Ras-related protein Rab-30 (RAB30) (Bos taurus (Bovine)).